The following is a 256-amino-acid chain: uncharacterized protein (256 aa).

Residues 1-22 (MGYLKRFALYISVMILIFAIAG) form the signal peptide. C23 carries N-palmitoyl cysteine lipidation. A lipid anchor (S-diacylglycerol cysteine) is attached at C23.

Belongs to the staphylococcal tandem lipoprotein family.

It is found in the cell membrane. This is an uncharacterized protein from Staphylococcus aureus (strain COL).